The sequence spans 856 residues: MRVKEKYQHLRRWGWRWGTMLLGMLMICSATEKLWVTVYYGVPVWKEATTTLFCASDAKAYDTEVHNVWATHACVPTDPNPQEVVLVNVTENFNMWKNDMVEQMHEDIISLWDQSLKPCVKLTPLCVSLKCTDLKNDTNTNSSSGGMIMEKGEIKNCSFNISTSIRGKVQKEYAFFYKHDIIPIDNDTTSYTLTSCNTSVITQACPKVSFEPIPIHYCAPAGFAILKCNNKTFNGTGPCTNVSTVQCTHGIKPVVSTQLLLNGSLAEEEVVIRSANLTDNVKTIIVQLNQSVEINCTRPNNNTRKRIRIQRGPGRTFVTIGKIGNMRQAHCNISRAKWNNTLKQIASKLREQYGNNKTIIFKQSSGGDLEIVTHSFNCGGEFFYCNSTQLFNSTWFNSTWSTEGSNNTEGSDTITLPCRIKQIINMWQEVGKAMYAPPISGQIRCSSNITGLLLTRDGGNNNNGSEIFRPGGGDMRDNWRSELYKYKVVKIEPLGVAPTKAKRRVVQREKRAVGIGALFLGFLGAAGSTMGAASMTLTVQARQLLSGIVQQQNNLLRAIEAQQHLLQLTVWGIKQLQARILAVERYLKDQQLLGIWGCSGKLICTTAVPWNASWSNKSLEQIWNHTTWMEWDREINNYTSLIHSLIEESQNQQEKNEQELLELDKWASLWNWFNITNWLWYIKIFIMIVGGLVGLRIVFAVLSIVNRVRQGHSPLSFQTHLPTPGGPDRPEGIEEEGGERDRDRSIRLVNGSLALIWDDLRSLCLFSYHRLRDLLLIVTRIVELLGRRGWEALKYWWNLLQYWSQELKNSAVSLLNATAIAVAEGTDRVIEVVQGACRAIRHIPRRIRQGLERILL.

An N-terminal signal peptide occupies residues 1–32 (MRVKEKYQHLRRWGWRWGTMLLGMLMICSATE). Residues 33–684 (KLWVTVYYGV…ITNWLWYIKI (652 aa)) lie on the Extracellular side of the membrane. A disulfide bridge links C54 with C74. 18 N-linked (GlcNAc...) asparagine; by host glycosylation sites follow: N88, N136, N141, N156, N160, N186, N197, N230, N234, N241, N262, N276, N289, N295, N301, N332, N339, and N356. Intrachain disulfides connect C119-C205, C126-C196, C131-C157, C218-C247, and C228-C239. Residues 131-156 (CTDLKNDTNTNSSSGGMIMEKGEIKN) form a V1 region. The V2 stretch occupies residues 157–196 (CSFNISTSIRGKVQKEYAFFYKHDIIPIDNDTTSYTLTSC). The segment at 296-330 (CTRPNNNTRKRIRIQRGPGRTFVTIGKIGNMRQAH) is V3. A disulfide bridge links C296 with C331. Positions 364-374 (SSGGDLEIVTH) are CD4-binding loop. Cystine bridges form between C378/C445 and C385/C418. The V4 stretch occupies residues 385–418 (CNSTQLFNSTWFNSTWSTEGSNNTEGSDTITLPC). 6 N-linked (GlcNAc...) asparagine; by host glycosylation sites follow: N386, N392, N397, N406, N448, and N463. 2 V5 regions span residues 461–471 (NNNGSEIFRPG) and 463–471 (NGSEIFRPG). Positions 512–532 (AVGIGALFLGFLGAAGSTMGA) are fusion peptide. An immunosuppression region spans residues 574-592 (KQLQARILAVERYLKDQQL). Residues C598 and C604 are joined by a disulfide bond. Residues N611, N616, N624, N637, and N674 are each glycosylated (N-linked (GlcNAc...) asparagine; by host). Residues 633–667 (REINNYTSLIHSLIEESQNQQEKNEQELLELDKWA) adopt a coiled-coil conformation. The tract at residues 662–683 (ELDKWASLWNWFNITNWLWYIK) is MPER; binding to GalCer. Residues 685 to 705 (FIMIVGGLVGLRIVFAVLSIV) traverse the membrane as a helical segment. Residues 706–856 (NRVRQGHSPL…IRQGLERILL (151 aa)) are Cytoplasmic-facing. The tract at residues 715 to 742 (LSFQTHLPTPGGPDRPEGIEEEGGERDR) is disordered. Residues C764 and C837 are each lipidated (S-palmitoyl cysteine; by host). A Di-leucine internalization motif motif is present at residues 855 to 856 (LL).

The protein belongs to the HIV-1 env protein family. As to quaternary structure, the mature envelope protein (Env) consists of a homotrimer of non-covalently associated gp120-gp41 heterodimers. The resulting complex protrudes from the virus surface as a spike. There seems to be as few as 10 spikes on the average virion. Interacts with host CD4, CCR5 and CXCR4. Gp120 also interacts with the C-type lectins CD209/DC-SIGN and CLEC4M/DC-SIGNR (collectively referred to as DC-SIGN(R)). Gp120 and gp41 interact with GalCer. Gp120 interacts with host ITGA4/ITGB7 complex; on CD4+ T-cells, this interaction results in rapid activation of integrin ITGAL/LFA-1, which facilitates efficient cell-to-cell spreading of HIV-1. Gp120 interacts with cell-associated heparan sulfate; this interaction increases virus infectivity on permissive cells and may be involved in infection of CD4- cells. The mature envelope protein (Env) consists of a homotrimer of non-covalently associated gp120-gp41 heterodimers. The resulting complex protrudes from the virus surface as a spike. There seems to be as few as 10 spikes on the average virion. In terms of processing, highly glycosylated by host. The high number of glycan on the protein is reffered to as 'glycan shield' because it contributes to hide protein sequence from adaptive immune system. Palmitoylation of the transmembrane protein and of Env polyprotein (prior to its proteolytic cleavage) is essential for their association with host cell membrane lipid rafts. Palmitoylation is therefore required for envelope trafficking to classical lipid rafts, but not for viral replication. Post-translationally, specific enzymatic cleavages in vivo yield mature proteins. Envelope glycoproteins are synthesized as an inactive precursor that is heavily N-glycosylated and processed likely by host cell furin in the Golgi to yield the mature SU and TM proteins. The cleavage site between SU and TM requires the minimal sequence [KR]-X-[KR]-R. About 2 of the 9 disulfide bonds of gp41 are reduced by P4HB/PDI, following binding to CD4 receptor.

It is found in the virion membrane. Its subcellular location is the host cell membrane. It localises to the host endosome membrane. Its function is as follows. Oligomerizes in the host endoplasmic reticulum into predominantly trimers. In a second time, gp160 transits in the host Golgi, where glycosylation is completed. The precursor is then proteolytically cleaved in the trans-Golgi and thereby activated by cellular furin or furin-like proteases to produce gp120 and gp41. Functionally, attaches the virus to the host lymphoid cell by binding to the primary receptor CD4. This interaction induces a structural rearrangement creating a high affinity binding site for a chemokine coreceptor like CXCR4 and/or CCR5. Acts as a ligand for CD209/DC-SIGN and CLEC4M/DC-SIGNR, which are respectively found on dendritic cells (DCs), and on endothelial cells of liver sinusoids and lymph node sinuses. These interactions allow capture of viral particles at mucosal surfaces by these cells and subsequent transmission to permissive cells. HIV subverts the migration properties of dendritic cells to gain access to CD4+ T-cells in lymph nodes. Virus transmission to permissive T-cells occurs either in trans (without DCs infection, through viral capture and transmission), or in cis (following DCs productive infection, through the usual CD4-gp120 interaction), thereby inducing a robust infection. In trans infection, bound virions remain infectious over days and it is proposed that they are not degraded, but protected in non-lysosomal acidic organelles within the DCs close to the cell membrane thus contributing to the viral infectious potential during DCs' migration from the periphery to the lymphoid tissues. On arrival at lymphoid tissues, intact virions recycle back to DCs' cell surface allowing virus transmission to CD4+ T-cells. Acts as a class I viral fusion protein. Under the current model, the protein has at least 3 conformational states: pre-fusion native state, pre-hairpin intermediate state, and post-fusion hairpin state. During fusion of viral and target intracellular membranes, the coiled coil regions (heptad repeats) assume a trimer-of-hairpins structure, positioning the fusion peptide in close proximity to the C-terminal region of the ectodomain. The formation of this structure appears to drive apposition and subsequent fusion of viral and target cell membranes. Complete fusion occurs in host cell endosomes and is dynamin-dependent, however some lipid transfer might occur at the plasma membrane. The virus undergoes clathrin-dependent internalization long before endosomal fusion, thus minimizing the surface exposure of conserved viral epitopes during fusion and reducing the efficacy of inhibitors targeting these epitopes. Membranes fusion leads to delivery of the nucleocapsid into the cytoplasm. This Homo sapiens (Human) protein is Envelope glycoprotein gp160.